Consider the following 406-residue polypeptide: Argininosuccinate synthase (406 aa).

ATP contacts are provided by residues 12 to 20 and Ala-40; that span reads AYSGGLDTS. Residues Tyr-92 and Ser-97 each contribute to the L-citrulline site. Gly-122 serves as a coordination point for ATP. Residues Thr-124, Asn-128, and Asp-129 each contribute to the L-aspartate site. Residue Asn-128 participates in L-citrulline binding. The L-citrulline site is built by Arg-132, Ser-181, Ser-190, Glu-266, and Tyr-278.

This sequence belongs to the argininosuccinate synthase family. Type 1 subfamily. In terms of assembly, homotetramer.

Its subcellular location is the cytoplasm. It carries out the reaction L-citrulline + L-aspartate + ATP = 2-(N(omega)-L-arginino)succinate + AMP + diphosphate + H(+). Its pathway is amino-acid biosynthesis; L-arginine biosynthesis; L-arginine from L-ornithine and carbamoyl phosphate: step 2/3. This chain is Argininosuccinate synthase, found in Serratia proteamaculans (strain 568).